The sequence spans 387 residues: MNASMPRDGALLVNAPLHIALAAGGTGGHVFPAEALAGELIRRGHKLTLITDKRGHVYGGTLGLLDTKRILAGGVAGRGVIGRLRGMIELAMGSLQAYGLLRRLRPDVVVGFGGYASVPTMLAAIRLKLPTVVHEQNAVPGRANRLLAARVSRYAVSFARAERPRGARPVVVGMPVRPSVLALRGEGYDAPRPGLDFRLLITGGSQGARVFATLVPQALALLSPAHRARLRVTQQCRPEDIEAVRATYEAQGIDALLSAFFSDLPERLRDAHLVICRSGASTVGELAALGRPAILVPFPHAIDDHQTANARGLDEVGGGWLMPQAALTPQALAERLGELMDDPDVLVRAAQCARGAGVPDAAVRLADLVSATADHRVPEMPPKEISA.

UDP-N-acetyl-alpha-D-glucosamine-binding positions include 26–28 (TGG), Asn-137, Arg-177, Ser-205, and Gln-306.

It belongs to the glycosyltransferase 28 family. MurG subfamily.

It localises to the cell inner membrane. It carries out the reaction di-trans,octa-cis-undecaprenyl diphospho-N-acetyl-alpha-D-muramoyl-L-alanyl-D-glutamyl-meso-2,6-diaminopimeloyl-D-alanyl-D-alanine + UDP-N-acetyl-alpha-D-glucosamine = di-trans,octa-cis-undecaprenyl diphospho-[N-acetyl-alpha-D-glucosaminyl-(1-&gt;4)]-N-acetyl-alpha-D-muramoyl-L-alanyl-D-glutamyl-meso-2,6-diaminopimeloyl-D-alanyl-D-alanine + UDP + H(+). It functions in the pathway cell wall biogenesis; peptidoglycan biosynthesis. Its function is as follows. Cell wall formation. Catalyzes the transfer of a GlcNAc subunit on undecaprenyl-pyrophosphoryl-MurNAc-pentapeptide (lipid intermediate I) to form undecaprenyl-pyrophosphoryl-MurNAc-(pentapeptide)GlcNAc (lipid intermediate II). In Rhodospirillum rubrum (strain ATCC 11170 / ATH 1.1.1 / DSM 467 / LMG 4362 / NCIMB 8255 / S1), this protein is UDP-N-acetylglucosamine--N-acetylmuramyl-(pentapeptide) pyrophosphoryl-undecaprenol N-acetylglucosamine transferase.